The chain runs to 534 residues: DNA-directed RNA polymerase III subunit RPC3 (534 aa).

The tract at residues 161 to 181 (PSVPTTENSDPGPPPPAPTLV) is disordered. Ser-194 is subject to Phosphoserine. A disordered region spans residues 197 to 228 (GKGKRRRSSDEDAAGEPKAKRPKYTTDNKEPI). Over residues 211-228 (GEPKAKRPKYTTDNKEPI) the composition is skewed to basic and acidic residues.

The protein belongs to the eukaryotic RPC3/POLR3C RNA polymerase subunit family. As to quaternary structure, component of the RNA polymerase III complex consisting of 17 subunits: a ten-subunit horseshoe-shaped catalytic core composed of POLR3A/RPC1, POLR3B/RPC2, POLR1C/RPAC1, POLR1D/RPAC2, POLR3K/RPC10, POLR2E/RPABC1, POLR2F/RPABC2, POLR2H/RPABC3, POLR2K/RPABC4 and POLR2L/RPABC5; a mobile stalk composed of two subunits POLR3H/RPC8 and CRCP/RPC9, protruding from the core and functioning primarily in transcription initiation; and additional subunits homologous to general transcription factors of the RNA polymerase II machinery, POLR3C/RPC3-POLR3F/RPC6-POLR3G/RPC7 heterotrimer required for transcription initiation and POLR3D/RPC4-POLR3E/RPC5 heterodimer involved in both transcription initiation and termination. Directly interacts with POLR3G/RPC7 and POLR3GL. Directly interacts with POLR3F/RPC6. Interacts with GTF3C4. As part of the RNA polymerase III complex, interacts with PKP2.

It is found in the nucleus. Functionally, DNA-dependent RNA polymerase catalyzes the transcription of DNA into RNA using the four ribonucleoside triphosphates as substrates. Specific peripheric component of RNA polymerase III (Pol III) which synthesizes small non-coding RNAs including 5S rRNA, snRNAs, tRNAs and miRNAs from at least 500 distinct genomic loci. Part of POLR3C/RPC3-POLR3F/RPC6-POLR3G/RPC7 heterotrimer, coordinates the dynamics of Pol III stalk and clamp modules during the transition from apo to elongation state. Pol III plays a key role in sensing and limiting infection by intracellular bacteria and DNA viruses. Acts as a nuclear and cytosolic DNA sensor involved in innate immune response. Can sense non-self dsDNA that serves as template for transcription into dsRNA. The non-self RNA polymerase III transcripts, such as Epstein-Barr virus-encoded RNAs (EBERs) induce type I interferon and NF-kappa-B through the RIG-I pathway. Preferentially binds single-stranded DNA (ssDNA) in a sequence-independent manner. This is DNA-directed RNA polymerase III subunit RPC3 from Homo sapiens (Human).